We begin with the raw amino-acid sequence, 1054 residues long: SMC5-SMC6 complex localization factor protein 1 (1054 aa).

2 BRCT domains span residues 2–80 (EDSA…AKSG) and 121–199 (PGAF…LLEK). Residues 283-303 (RHGLENQKETKKKDKNIQRSY) are disordered. A compositionally biased stretch (basic and acidic residues) spans 284–299 (HGLENQKETKKKDKNI). Residues 407 to 1054 (PRGILNLIEN…MMCQSITELS (648 aa)) are NSE5-like domain; mediates interaction with SLF2. 3 ANK repeats span residues 802 to 832 (KGET…DINV), 836 to 865 (AGWT…EVDL), and 870 to 900 (DGVT…ELLQ).

As to quaternary structure, interacts (via BRCT domains) with RAD18 (via C-terminus and phosphorylated form); this interaction is required for efficient repair of UV-induced DNA damage. Interacts (via N-terminus) with SLF2; this interaction links RAD18 to the SMC5-SMC6 complex. Interacts (via BRCT domains) with RAD18; this interaction occurs in a SLF2-independent manner. Interacts with SMC6. Widely expressed. Expressed in testis. Expressed in spermatocytes.

It is found in the nucleus. Its subcellular location is the cytoplasm. The protein localises to the cytoskeleton. The protein resides in the microtubule organizing center. It localises to the centrosome. Functionally, plays a role in the DNA damage response (DDR) pathway by regulating postreplication repair of UV-damaged DNA and genomic stability maintenance. The SLF1-SLF2 complex acts to link RAD18 with the SMC5-SMC6 complex at replication-coupled interstrand cross-links (ICL) and DNA double-strand breaks (DSBs) sites on chromatin during DNA repair in response to stalled replication forks. Promotes the recruitment of SLF2 and the SMC5-SMC6 complex to DNA lesions. The sequence is that of SMC5-SMC6 complex localization factor protein 1 from Mus musculus (Mouse).